A 23-amino-acid polypeptide reads, in one-letter code: Paralytic peptide 2 (23 aa).

Cys7 and Cys19 are joined by a disulfide.

It belongs to the GBP/PSP1/paralytic peptide family. In terms of tissue distribution, hemolymph.

Causes rapid, rigid paralysis when injected into Lepidopteran larvae. The physiological role may be to reduce hemolymph loss following injury and promote wound healing. This chain is Paralytic peptide 2, found in Spodoptera exigua (Beet armyworm).